Here is a 449-residue protein sequence, read N- to C-terminus: Myb-related protein Pp1 (449 aa).

Positions 1–30 (LGNRWSAIAIPRRTDNEIKNYWNTHLKKRL) constitute an HTH myb-type domain. The H-T-H motif DNA-binding region spans 5–26 (WSAIAIPRRTDNEIKNYWNTHL).

It is found in the nucleus. In terms of biological role, possible transcription activator. The sequence is that of Myb-related protein Pp1 (PP1) from Physcomitrium patens (Spreading-leaved earth moss).